The sequence spans 126 residues: Large ribosomal subunit protein bL12 (126 aa).

The protein belongs to the bacterial ribosomal protein bL12 family. Homodimer. Part of the ribosomal stalk of the 50S ribosomal subunit. Forms a multimeric L10(L12)X complex, where L10 forms an elongated spine to which 2 to 4 L12 dimers bind in a sequential fashion. Binds GTP-bound translation factors.

Its function is as follows. Forms part of the ribosomal stalk which helps the ribosome interact with GTP-bound translation factors. Is thus essential for accurate translation. The protein is Large ribosomal subunit protein bL12 of Coxiella burnetii (strain CbuK_Q154) (Coxiella burnetii (strain Q154)).